The following is a 383-amino-acid chain: Lipid-A-disaccharide synthase (383 aa).

It belongs to the LpxB family.

It carries out the reaction 2-N,3-O-bis[(3R)-3-hydroxytetradecanoyl]-alpha-D-glucosaminyl 1-phosphate + UDP-2-N,3-O-bis[(3R)-3-hydroxytetradecanoyl]-alpha-D-glucosamine = lipid A disaccharide (E. coli) + UDP + H(+). It catalyses the reaction a lipid X + a UDP-2-N,3-O-bis[(3R)-3-hydroxyacyl]-alpha-D-glucosamine = a lipid A disaccharide + UDP + H(+). It functions in the pathway glycolipid biosynthesis; lipid IV(A) biosynthesis; lipid IV(A) from (3R)-3-hydroxytetradecanoyl-[acyl-carrier-protein] and UDP-N-acetyl-alpha-D-glucosamine: step 5/6. Condensation of UDP-2,3-diacylglucosamine and 2,3-diacylglucosamine-1-phosphate to form lipid A disaccharide, a precursor of lipid A, a phosphorylated glycolipid that anchors the lipopolysaccharide to the outer membrane of the cell. This chain is Lipid-A-disaccharide synthase, found in Pectobacterium carotovorum subsp. carotovorum (strain PC1).